Consider the following 194-residue polypeptide: Phosphoheptose isomerase (194 aa).

The SIS domain occupies 37 to 194; that stretch reads ISNSFKQGGK…LIEFEMAKQA (158 aa). A substrate-binding site is contributed by 52–54; sequence NGG. The Zn(2+) site is built by H61 and E65. Substrate-binding positions include E65, 93–94, 119–121, S124, and Q172; these read ND and STS. Residues Q172 and H180 each coordinate Zn(2+).

It belongs to the SIS family. GmhA subfamily. As to quaternary structure, homotetramer. Zn(2+) is required as a cofactor.

The protein localises to the cytoplasm. The catalysed reaction is 2 D-sedoheptulose 7-phosphate = D-glycero-alpha-D-manno-heptose 7-phosphate + D-glycero-beta-D-manno-heptose 7-phosphate. The protein operates within carbohydrate biosynthesis; D-glycero-D-manno-heptose 7-phosphate biosynthesis; D-glycero-alpha-D-manno-heptose 7-phosphate and D-glycero-beta-D-manno-heptose 7-phosphate from sedoheptulose 7-phosphate: step 1/1. Catalyzes the isomerization of sedoheptulose 7-phosphate in D-glycero-D-manno-heptose 7-phosphate. The polypeptide is Phosphoheptose isomerase (Haemophilus influenzae (strain PittEE)).